The chain runs to 142 residues: Large ribosomal subunit protein uL13c (142 aa).

The protein belongs to the universal ribosomal protein uL13 family. Part of the 50S ribosomal subunit.

It localises to the plastid. The protein localises to the chloroplast. This Pyropia yezoensis (Susabi-nori) protein is Large ribosomal subunit protein uL13c.